The primary structure comprises 397 residues: Acetate kinase (397 aa).

Asn8 contacts Mg(2+). Lys15 contributes to the ATP binding site. Arg89 contributes to the substrate binding site. Asp146 serves as the catalytic Proton donor/acceptor. ATP is bound by residues 206-210 (HLGNG), 281-283 (DLR), and 329-333 (GVGEN). Residue Glu382 participates in Mg(2+) binding.

Belongs to the acetokinase family. As to quaternary structure, homodimer. The cofactor is Mg(2+). It depends on Mn(2+) as a cofactor.

The protein localises to the cytoplasm. The catalysed reaction is acetate + ATP = acetyl phosphate + ADP. It participates in metabolic intermediate biosynthesis; acetyl-CoA biosynthesis; acetyl-CoA from acetate: step 1/2. Its function is as follows. Catalyzes the formation of acetyl phosphate from acetate and ATP. Can also catalyze the reverse reaction. This is Acetate kinase from Bacillus cereus (strain ATCC 10987 / NRS 248).